Here is a 21-residue protein sequence, read N- to C-terminus: Pseudogermin (21 aa).

Belongs to the germin family. As to quaternary structure, homotetramer.

It localises to the secreted. Its subcellular location is the extracellular space. The protein localises to the apoplast. It is found in the cell wall. Functionally, may subsume the role of germin at the low water potentials during embryogenesis. The protein is Pseudogermin of Triticum aestivum (Wheat).